The chain runs to 402 residues: mRNA-capping enzyme subunit alpha (402 aa).

Lys67 acts as the N6-GMP-lysine intermediate in catalysis. Residues 374-402 (SVTKRKLDETSNDDAPAIKKVAKESEKEI) form a disordered region.

The protein belongs to the eukaryotic GTase family. As to quaternary structure, heterodimer. The mRNA-capping enzyme is composed of two separate chains alpha and beta, respectively a mRNA guanylyltransferase and an mRNA 5'-triphosphate monophosphatase.

It is found in the nucleus. It catalyses the reaction a 5'-end diphospho-ribonucleoside in mRNA + GTP + H(+) = a 5'-end (5'-triphosphoguanosine)-ribonucleoside in mRNA + diphosphate. Functionally, second step of mRNA capping. Transfer of the GMP moiety of GTP to the 5'-end of RNA via an enzyme-GMP covalent reaction intermediate. The polypeptide is mRNA-capping enzyme subunit alpha (ceg1) (Schizosaccharomyces pombe (strain 972 / ATCC 24843) (Fission yeast)).